We begin with the raw amino-acid sequence, 25 residues long: XHPDLFXXRPDNTASPKFEDPRLNP.

The segment at 1 to 25 (XHPDLFXXRPDNTASPKFEDPRLNP) is disordered.

The protein belongs to the ribosome-inactivating protein family.

It catalyses the reaction Endohydrolysis of the N-glycosidic bond at one specific adenosine on the 28S rRNA.. Inhibits protein synthesis but does not possess ribonuclease activity. Also inhibits HIV-1 reverse transcriptase, beta-glucosidase and beta-glucuronidase. This chain is Ribosome-inactivating protein velutin, found in Flammulina velutipes (Agaricus velutipes).